The chain runs to 424 residues: Adenylosuccinate synthetase (424 aa).

GTP-binding positions include 12–18 (GDEGKGK) and 40–42 (GHT). Asp13 (proton acceptor) is an active-site residue. Mg(2+)-binding residues include Asp13 and Gly40. IMP is bound by residues 13–16 (DEGK), 38–41 (NAGH), Thr130, Arg144, Asn220, Thr235, and Arg299. Catalysis depends on His41, which acts as the Proton donor. Residue 295-301 (VTTGRRR) participates in substrate binding. GTP-binding positions include Arg301, 327-329 (KLD), and 412-414 (GTG).

It belongs to the adenylosuccinate synthetase family. Homodimer. It depends on Mg(2+) as a cofactor.

It localises to the cytoplasm. It carries out the reaction IMP + L-aspartate + GTP = N(6)-(1,2-dicarboxyethyl)-AMP + GDP + phosphate + 2 H(+). The protein operates within purine metabolism; AMP biosynthesis via de novo pathway; AMP from IMP: step 1/2. Functionally, plays an important role in the de novo pathway and in the salvage pathway of purine nucleotide biosynthesis. Catalyzes the first committed step in the biosynthesis of AMP from IMP. This is Adenylosuccinate synthetase from Aspergillus flavus (strain ATCC 200026 / FGSC A1120 / IAM 13836 / NRRL 3357 / JCM 12722 / SRRC 167).